A 550-amino-acid chain; its full sequence is Transcriptional repressor RHIT (550 aa).

3 disordered regions span residues 1–67 (MSAD…ETRA), 174–200 (VQGK…VVEV), and 216–296 (KSFK…EGLA). Basic and acidic residues-rich tracts occupy residues 11–22 (AQDKERARETPG), 45–58 (ESPH…EPHP), and 187–200 (LGHE…VVEV). Residues 124-193 (VTFEDMALYL…SRQLGHEEEE (70 aa)) enclose the KRAB domain. A Glycyl lysine isopeptide (Lys-Gly) (interchain with G-Cter in SUMO2) cross-link involves residue K216. Residues 267-281 (DLPKTQEGHFPEQPR) show a composition bias toward basic and acidic residues. S290 is subject to Phosphoserine. 8 C2H2-type zinc fingers span residues 306 to 328 (YKCE…RRTH), 334 to 356 (YACT…QIIH), 362 to 384 (YTCP…QRIH), 390 to 412 (YVCD…QGTH), 418 to 440 (HKCP…QRTH), 446 to 468 (YPCP…NRTH), 474 to 496 (YHCL…QRTH), and 502 to 524 (YSCP…EKIH).

This sequence belongs to the krueppel C2H2-type zinc-finger protein family.

Its subcellular location is the nucleus. Its function is as follows. Transcriptional repressor involved in regulating MPV17L expression. By regulating MPV17L expression, contributes to the regulation of genes involved in H(2)O(2) metabolism and the mitochondrial apoptotic cascade. This Bos taurus (Bovine) protein is Transcriptional repressor RHIT (ZNF205).